We begin with the raw amino-acid sequence, 297 residues long: Bifunctional protein FolD 2 (297 aa).

NADP(+) is bound by residues 177–179 (GKS), isoleucine 202, and isoleucine 243.

It belongs to the tetrahydrofolate dehydrogenase/cyclohydrolase family. As to quaternary structure, homodimer.

It catalyses the reaction (6R)-5,10-methylene-5,6,7,8-tetrahydrofolate + NADP(+) = (6R)-5,10-methenyltetrahydrofolate + NADPH. The enzyme catalyses (6R)-5,10-methenyltetrahydrofolate + H2O = (6R)-10-formyltetrahydrofolate + H(+). The protein operates within one-carbon metabolism; tetrahydrofolate interconversion. Catalyzes the oxidation of 5,10-methylenetetrahydrofolate to 5,10-methenyltetrahydrofolate and then the hydrolysis of 5,10-methenyltetrahydrofolate to 10-formyltetrahydrofolate. The sequence is that of Bifunctional protein FolD 2 from Rhizorhabdus wittichii (strain DSM 6014 / CCUG 31198 / JCM 15750 / NBRC 105917 / EY 4224 / RW1) (Sphingomonas wittichii).